We begin with the raw amino-acid sequence, 128 residues long: Natriuretic peptides A (128 aa).

Residues 36–84 (QVASEQNEEAGAVLSALPEVPSWPGEAGPAQREGGALGRGPWDSSDRSA) are disordered. Positions 68–78 (EGGALGRGPWD) are excised as a propeptide. Position 104 is a phosphoserine (S104). C105 and C121 are disulfide-bonded. The important for degradation of atrial natriuretic peptide by IDE stretch occupies residues 122-126 (NSFRY).

It belongs to the natriuretic peptide family. In terms of assembly, homodimer; disulfide-linked antiparallel dimer. The precursor molecule is proteolytically cleaved by CORIN at Arg-98 to produce atrial natriuretic peptide. Undergoes further proteolytic cleavage by unknown proteases to give rise to long-acting natriuretic peptide, vessel dilator and kaliuretic peptide. Additional processing gives rise to the auriculin and atriopeptin peptides. In the kidneys, alternative processing by an unknown protease results in the peptide urodilatin. Post-translationally, cleavage by MME initiates degradation of the factor and thereby regulates its activity. Degraded by IDE (in vitro). During IDE degradation, the resulting products can temporarily stimulate NPR2 to produce cGMP, before the fragments are completely degraded and inactivated by IDE (in vitro). In terms of processing, degraded by IDE. Phosphorylation on Ser-104 decreases vasorelaxant activity.

It localises to the secreted. It is found in the perikaryon. The protein localises to the cell projection. In terms of biological role, hormone that plays a key role in mediating cardio-renal homeostasis, and is involved in vascular remodeling and regulating energy metabolism. Acts by specifically binding and stimulating NPR1 to produce cGMP, which in turn activates effector proteins, such as PRKG1, that drive various biological responses. Regulates vasodilation, natriuresis, diuresis and aldosterone synthesis and is therefore essential for regulating blood pressure, controlling the extracellular fluid volume and maintaining the fluid-electrolyte balance. Also involved in inhibiting cardiac remodeling and cardiac hypertrophy by inducing cardiomyocyte apoptosis and attenuating the growth of cardiomyocytes and fibroblasts. Plays a role in female pregnancy by promoting trophoblast invasion and spiral artery remodeling in uterus, and thus prevents pregnancy-induced hypertension. In adipose tissue, acts in various cGMP- and PKG-dependent pathways to regulate lipid metabolism and energy homeostasis. This includes up-regulating lipid metabolism and mitochondrial oxygen utilization by activating the AMP-activated protein kinase (AMPK), and increasing energy expenditure by acting via MAPK11 to promote the UCP1-dependent thermogenesis of brown adipose tissue. Binds the clearance receptor NPR3 which removes the hormone from circulation. Its function is as follows. May have a role in cardio-renal homeostasis through regulation of natriuresis, diuresis, vasodilation, and inhibiting aldosterone synthesis. In vitro, promotes the production of cGMP and induces vasodilation. May promote natriuresis, at least in part, by enhancing prostaglandin E2 synthesis resulting in the inhibition of renal Na+-K+-ATPase. However reports on the involvement of this peptide in mammal blood volume and blood pressure homeostasis are conflicting; according to a report, in vivo it is not sufficient to activate cGMP and does not inhibit collecting duct transport nor effect diuresis and natriuresis. Appears to bind to specific receptors that are distinct from the receptors bound by atrial natriuretic peptide and vessel dilator. Possibly enhances protein excretion in urine by decreasing proximal tubular protein reabsorption. May have a role in cardio-renal homeostasis through regulation of natriuresis, diuresis, and vasodilation. In vitro, promotes the production of cGMP and induces vasodilation. May promote natriuresis, at least in part, by enhancing prostaglandin E2 synthesis resulting in the inhibition of renal Na+-K+-ATPase. However reports on the involvement of this peptide in mammal blood volume and blood pressure homeostasis are conflicting; according to a report it is not sufficient to activate cGMP and does not inhibit collecting duct transport nor effect diuresis and natriuresis. Appears to bind to specific receptors that are distinct from the receptors bound by the atrial natriuretic and long-acting natriuretic peptides. Possibly functions in protein excretion in urine by maintaining the integrity of the proximal tubules and enhancing protein excretion by decreasing proximal tubular protein reabsorption. Functionally, may have a role in cardio-renal homeostasis through regulation of diuresis and inhibiting aldosterone synthesis. In vitro, promotes the production of cGMP and induces vasodilation. May promote natriuresis, at least in part, by enhancing prostaglandin E2 synthesis resulting in the inhibition of renal Na+-K+-ATPase. May have a role in potassium excretion but not sodium excretion (natriuresis). Possibly enhances protein excretion in urine by decreasing proximal tubular protein reabsorption. In terms of biological role, hormone produced in the kidneys that appears to be important for maintaining cardio-renal homeostasis. Mediates vasodilation, natriuresis and diuresis primarily in the renal system, in order to maintain the extracellular fluid volume and control the fluid-electrolyte balance. Specifically binds and stimulates cGMP production by renal transmembrane receptors, likely NPR1. Urodilatin not ANP, may be the natriuretic peptide responsible for the regulation of sodium and water homeostasis in the kidney. Its function is as follows. May have a role in cardio-renal homeostasis through regulation of natriuresis and vasodilation. In vivo promotes natriuresis and in vitro, vasodilates renal artery strips. May have a role in cardio-renal homeostasis through regulation of regulation of natriuresis and vasodilation. In vivo promotes natriuresis. In vitro, vasodilates intestinal smooth muscle but not smooth muscle strips. Functionally, may have a role in cardio-renal homeostasis through regulation of natriuresis and vasodilation. In vivo promotes natriuresis. In vitro, selectively vasodilates intestinal and vascular smooth muscle strips. In terms of biological role, may have a role in cardio-renal homeostasis through regulation of natriuresis and vasodilation. In vivo promotes natriuresis. In vitro, selectively vasodilates intestinal smooth muscle but not vascular smooth muscle strips. The protein is Natriuretic peptides A (NPPA) of Cavia porcellus (Guinea pig).